Reading from the N-terminus, the 106-residue chain is ATP-dependent Clp protease adapter protein ClpS (106 aa).

This sequence belongs to the ClpS family. As to quaternary structure, binds to the N-terminal domain of the chaperone ClpA.

Its function is as follows. Involved in the modulation of the specificity of the ClpAP-mediated ATP-dependent protein degradation. The protein is ATP-dependent Clp protease adapter protein ClpS of Erwinia tasmaniensis (strain DSM 17950 / CFBP 7177 / CIP 109463 / NCPPB 4357 / Et1/99).